The chain runs to 182 residues: Ribosome maturation factor RimM (182 aa).

Residues 102-182 (EEGDYYWKDL…SIEVDWDPGF (81 aa)) enclose the PRC barrel domain.

The protein belongs to the RimM family. Binds ribosomal protein uS19.

The protein localises to the cytoplasm. Functionally, an accessory protein needed during the final step in the assembly of 30S ribosomal subunit, possibly for assembly of the head region. Essential for efficient processing of 16S rRNA. May be needed both before and after RbfA during the maturation of 16S rRNA. It has affinity for free ribosomal 30S subunits but not for 70S ribosomes. In Escherichia fergusonii (strain ATCC 35469 / DSM 13698 / CCUG 18766 / IAM 14443 / JCM 21226 / LMG 7866 / NBRC 102419 / NCTC 12128 / CDC 0568-73), this protein is Ribosome maturation factor RimM.